The following is a 1103-amino-acid chain: MAGASVKVAVRVRPFNARETSQDAKCVVSMQGNTTSIINPKQSKDAPKSFTFDYSYWSHTSTEDPQFASQQQVYRDIGEEMLLHAFEGYNVCIFAYGQTGAGKSYTMMGRQEPGQQGIVPQLCEDLFSRVSENQSAQLSYSVEVSYMEIYCERVRDLLNPKSRGSLRVREHPILGPYVQDLSKLAVTSYADIADLMDCGNKARTVAATNMNETSSRSHAVFTIVFTQRCHDQLTGLDSEKVSKISLVDLAGSERADSSGARGMRLKEGANINKSLTTLGKVISALADMQSKKRKSDFIPYRDSVLTWLLKENLGGNSRTAMIAALSPADINYEETLSTLRYADRTKQIRCNAIINEDPNARLIRELQEEVARLRELLMAQGLSASALEGLKTEEGSVRGALPAVSSPPAPVSPSSPTTHNGELEPSFSPNTESQIGPEEAMERLQETEKIIAELNETWEEKLRKTEALRMEREALLAEMGVAVREDGGTVGVFSPKKTPHLVNLNEDPLMSECLLYHIKDGVTRVGQVDMDIKLTGQFIREQHCLFRSIPQPDGEVVVTLEPCEGAETYVNGKLVTEPLVLKSGNRIVMGKNHVFRFNHPEQARLERERGVPPPPGPPSEPVDWNFAQKELLEQQGIDIKLEMEKRLQDLENQYRKEKEEADLLLEQQRLYADSDSGDDSDKRSCEESWRLISSLREQLPPTTVQTIVKRCGLPSSGKRRAPRRVYQIPQRRRLQGKDPRWATMADLKMQAVKEICYEVALADFRHGRAEIEALAALKMRELCRTYGKPDGPGDAWRAVARDVWDTVGEEEGGGAGSGGGSEEGARGAEVEDLRAHIDKLTGILQEVKLQNSSKDRELQALRDRMLRMERVIPLAQDHEDENEEGGEVPWAPPEGSEAAEEAAPSDRMPSARPPSPPLSSWERVSRLMEEDPAFRRGRLRWLKQEQLRLQGLQGSGGRGGGLRRPPARFVPPHDCKLRFPFKSNPQHRESWPGMGSGEAPTPLQPPEEVTPHPATPARRPPSPRRSHHPRRNSLDGGGRSRGAGSAQPEPQHFQPKKHNSYPQPPQPYPAQRPPGPRYPPYTTPPRMRRQRSAPDLKESGAAV.

Residues 5–348 (SVKVAVRVRP…LRYADRTKQI (344 aa)) enclose the Kinesin motor domain. 97 to 104 (GQTGAGKS) contacts ATP. Ser295 carries the post-translational modification Phosphoserine. 2 coiled-coil regions span residues 359–388 (NARLIRELQEEVARLRELLMAQGLSASALE) and 438–479 (EEAM…LAEM). Residues 400–438 (ALPAVSSPPAPVSPSSPTTHNGELEPSFSPNTESQIGPE) form a disordered region. Ser494 is subject to Phosphoserine. The 68-residue stretch at 523–590 (TRVGQVDMDI…LKSGNRIVMG (68 aa)) folds into the FHA domain. Residues 633-674 (EQQGIDIKLEMEKRLQDLENQYRKEKEEADLLLEQQRLYADS) are a coiled coil. Phosphoserine is present on residues Ser674 and Ser676. Disordered regions lie at residues 808–828 (GEEEGGGAGSGGGSEEGARGA), 874–924 (LAQD…WERV), and 950–1103 (QGLQ…GAAV). The span at 813-822 (GGAGSGGGSE) shows a compositional bias: gly residues. Positions 828 to 872 (AEVEDLRAHIDKLTGILQEVKLQNSSKDRELQALRDRMLRMERVI) form a coiled coil. Low complexity predominate over residues 893–910 (PEGSEAAEEAAPSDRMPS). At Ser915 the chain carries Phosphoserine. A compositionally biased stretch (gly residues) spans 953-962 (QGSGGRGGGL). The segment covering 1021–1031 (PSPRRSHHPRR) has biased composition (basic residues). Ser1033 carries the phosphoserine modification. At Arg1041 the chain carries Omega-N-methylarginine. The segment covering 1062–1083 (PQPPQPYPAQRPPGPRYPPYTT) has biased composition (pro residues). Thr1083 carries the phosphothreonine modification. A Phosphoserine modification is found at Ser1092. Residues 1092–1103 (SAPDLKESGAAV) are compositionally biased toward basic and acidic residues.

Belongs to the TRAFAC class myosin-kinesin ATPase superfamily. Kinesin family. Unc-104 subfamily. In terms of assembly, monomer. Interacts with BICD2. Phosphorylated on tyrosine residues. In terms of tissue distribution, expressed in all tissues examined, with most abundant expression in heart and skeletal muscle.

It localises to the cytoplasm. Its subcellular location is the cytoskeleton. Functionally, motor required for the retrograde transport of Golgi vesicles to the endoplasmic reticulum. Has a microtubule plus end-directed motility. In Homo sapiens (Human), this protein is Kinesin-like protein KIF1C (KIF1C).